A 448-amino-acid polypeptide reads, in one-letter code: Putative F-box/LRR-repeat protein At5g25860 (448 aa).

An F-box domain is found at 11-58 (RDAVNCLPDEILAKILSYLPTKRAVSTSLISKRWRNLFALMIQLFESQ). 5 LRR repeats span residues 82 to 106 (QESF…SILC), 185 to 214 (FLHA…FLHD), 215 to 240 (LRGY…TVHF), 310 to 341 (TLSL…YFES), and 342 to 367 (NEKE…VLKG).

The protein is Putative F-box/LRR-repeat protein At5g25860 of Arabidopsis thaliana (Mouse-ear cress).